Consider the following 568-residue polypeptide: Proline--tRNA ligase (568 aa).

Belongs to the class-II aminoacyl-tRNA synthetase family. ProS type 1 subfamily. In terms of assembly, homodimer.

It is found in the cytoplasm. The catalysed reaction is tRNA(Pro) + L-proline + ATP = L-prolyl-tRNA(Pro) + AMP + diphosphate. Functionally, catalyzes the attachment of proline to tRNA(Pro) in a two-step reaction: proline is first activated by ATP to form Pro-AMP and then transferred to the acceptor end of tRNA(Pro). As ProRS can inadvertently accommodate and process non-cognate amino acids such as alanine and cysteine, to avoid such errors it has two additional distinct editing activities against alanine. One activity is designated as 'pretransfer' editing and involves the tRNA(Pro)-independent hydrolysis of activated Ala-AMP. The other activity is designated 'posttransfer' editing and involves deacylation of mischarged Ala-tRNA(Pro). The misacylated Cys-tRNA(Pro) is not edited by ProRS. This chain is Proline--tRNA ligase, found in Aliarcobacter butzleri (strain RM4018) (Arcobacter butzleri).